The primary structure comprises 287 residues: Very long chain fatty acid elongase 4 (287 aa).

The next 3 membrane-spanning stretches (helical) occupy residues 33–53 (ILVYCCVLYILLVFMVPEHIM), 64–84 (PFVFWNIGLCLFSFCGAYSCV), and 115–135 (FWVFYFILSKIPEMIDTVFLV). The HxxHH motif motif lies at 145–149 (HWYHH). The active-site Nucleophile is the histidine 148. 4 consecutive transmembrane segments (helical) span residues 150 to 170 (LTVAIFCWHAGHALIPSGLWF), 172 to 192 (TMNYCVHSIMYFYYFMCACGM), 199 to 219 (IAPFITMMQLLQMVAGTLIVL), and 241 to 261 (LGLVMYGSYFFLFAVLFGKLY).

It belongs to the ELO family.

It localises to the membrane. The enzyme catalyses a very-long-chain acyl-CoA + malonyl-CoA + H(+) = a very-long-chain 3-oxoacyl-CoA + CO2 + CoA. Its function is as follows. Involved in the synthesis of fatty acids. Elongates C16:0 and C18:0 fatty acids to C26:0, with C24:0 being the main product. The chain is Very long chain fatty acid elongase 4 from Trypanosoma cruzi (strain CL Brener).